The primary structure comprises 175 residues: Cell number regulator 9 (175 aa).

2 consecutive transmembrane segments (helical) span residues 53-73 (GLCC…AEIV) and 80-100 (CGVA…HWIY).

It belongs to the cornifelin family. In terms of tissue distribution, expressed in roots, coleoptiles, leaves and stalks.

The protein localises to the membrane. The polypeptide is Cell number regulator 9 (CNR9) (Zea mays (Maize)).